The chain runs to 529 residues: Glycylpeptide N-tetradecanoyltransferase (529 aa).

Residues 1–10 are compositionally biased toward polar residues; sequence MSEQEGNQSE. The interval 1–65 is disordered; that stretch reads MSEQEGNQSE…ANPATKLTPS (65 aa). Basic and acidic residues predominate over residues 11-23; that stretch reads HQSEHVGESEGKL. The segment covering 26–40 has biased composition (polar residues); sequence ETPTTSQSTNASTGT. Residues 118 to 121, 252 to 254, and 260 to 264 each bind tetradecanoyl-CoA; these read FKFW, LCV, and SKRLT. Catalysis depends on Val529, which acts as the Proton acceptor; via carboxylate.

Belongs to the NMT family. In terms of assembly, monomer.

The protein localises to the cytoplasm. The catalysed reaction is N-terminal glycyl-[protein] + tetradecanoyl-CoA = N-tetradecanoylglycyl-[protein] + CoA + H(+). Functionally, adds a myristoyl group to the N-terminal glycine residue of certain cellular proteins. The chain is Glycylpeptide N-tetradecanoyltransferase from Ajellomyces capsulatus (Darling's disease fungus).